A 365-amino-acid polypeptide reads, in one-letter code: MQHSIGKTLLVAALATAIAGPVQAEKKSLHIYNWTDYIAPTTLKDFTKESGIDVSYDVFDSNETLEGKLVSGHSGYDIVVPSNNFLGKQIQAGAFQKLDKSKLPNWKNLDPALLKQLEVSDPGNQYAVPYLWGTNGIGYNVAKVKEVLGDQPIDSWAILFEPENMKKLAKCGVAFMDSGDEMLPAALNYLGLDPNTHDPKDYKKAEEVLTKVRPYVSYFHSSKYISDLANGNICVAFGYSGDVFQAAARAEEAGKGIDIQYVIPKEGANLWFDLMAIPADAKAADNAYAFIDYLLRPEVIAKVSDYVGYANAIPGARPLMDKSVSDSEEVYPPQAVLDKLYVSAVLPAKVLRLQTRTWTRIKTGK.

The N-terminal stretch at Met-1–Ala-24 is a signal peptide. The spermidine site is built by Thr-35, Glu-181, Asp-242, and Asn-269.

This sequence belongs to the bacterial solute-binding protein PotD/PotF family.

It is found in the periplasm. Functionally, spermidine-binding protein probably required for its uptake into cells. Binds spermidine with high affinity (KD=14.3 nM). Does not bind putrescine, cadaverine or spermine. Spermidine binding induces large inter-domain conformational changes. Implicated in induction of type 3 secretion systems (T3SS), which play a role in virulence. The sequence is that of Spermidine-binding periplasmic protein SpuE (spuE) from Pseudomonas aeruginosa (strain ATCC 15692 / DSM 22644 / CIP 104116 / JCM 14847 / LMG 12228 / 1C / PRS 101 / PAO1).